The chain runs to 155 residues: RNA pyrophosphohydrolase (155 aa).

Residues 6–148 (GYRANVAIVL…KQEVYRKALT (143 aa)) form the Nudix hydrolase domain. The Nudix box motif lies at 38-59 (GGVATGETPLQAMYRELHEEIG).

The protein belongs to the Nudix hydrolase family. RppH subfamily. A divalent metal cation is required as a cofactor.

Functionally, accelerates the degradation of transcripts by removing pyrophosphate from the 5'-end of triphosphorylated RNA, leading to a more labile monophosphorylated state that can stimulate subsequent ribonuclease cleavage. The polypeptide is RNA pyrophosphohydrolase (Francisella tularensis subsp. tularensis (strain FSC 198)).